The following is a 127-amino-acid chain: Small ribosomal subunit protein bS6 (127 aa).

Residues 99-127 form a disordered region; the sequence is PLPAPRVVPGSEPAAAPQEQPAANSEAAS. Positions 109 to 127 are enriched in low complexity; the sequence is SEPAAAPQEQPAANSEAAS.

The protein belongs to the bacterial ribosomal protein bS6 family.

Functionally, binds together with bS18 to 16S ribosomal RNA. The polypeptide is Small ribosomal subunit protein bS6 (Parasynechococcus marenigrum (strain WH8102)).